The chain runs to 146 residues: Benzoylsuccinyl-CoA thiolase subunit BbsA (146 aa).

Zn(2+)-binding residues include C42, C45, C55, and C58.

Belongs to the BbsA family. In terms of assembly, heterotetramer composed of two BbsA subunits and two BbsB subunits. Both BbsA and BbsB are essential for enzymatic activity.

It carries out the reaction (S)-2-benzoylsuccinyl-CoA + CoA = benzoyl-CoA + succinyl-CoA. It functions in the pathway xenobiotic degradation; toluene degradation. In terms of biological role, component of the BbsAB thiolase complex, which catalyzes the thiolytic cleavage of (S)-2-benzoylsuccinyl-CoA to succinyl-CoA and benzoyl-CoA, the final step of anaerobic toluene metabolism. The BbsA subunit critically contributes to an induced-fit process for productive binding of a CoA substrate into the active site of BbsB. This is Benzoylsuccinyl-CoA thiolase subunit BbsA from Geobacter metallireducens (strain ATCC 53774 / DSM 7210 / GS-15).